A 124-amino-acid polypeptide reads, in one-letter code: Small ribosomal subunit protein uS12 (124 aa).

A disordered region spans residues 1–25 (MATINQLVRKPRQASTYKSASPALD).

Belongs to the universal ribosomal protein uS12 family. In terms of assembly, part of the 30S ribosomal subunit. Contacts proteins S8 and S17. May interact with IF1 in the 30S initiation complex.

With S4 and S5 plays an important role in translational accuracy. Its function is as follows. Interacts with and stabilizes bases of the 16S rRNA that are involved in tRNA selection in the A site and with the mRNA backbone. Located at the interface of the 30S and 50S subunits, it traverses the body of the 30S subunit contacting proteins on the other side and probably holding the rRNA structure together. The combined cluster of proteins S8, S12 and S17 appears to hold together the shoulder and platform of the 30S subunit. The protein is Small ribosomal subunit protein uS12 of Xylella fastidiosa (strain 9a5c).